Reading from the N-terminus, the 193-residue chain is Ribonuclease HII (193 aa).

One can recognise an RNase H type-2 domain in the interval 15–193 (YIVAGIDEAG…PYHRRSFKCC (179 aa)). Residues Asp21, Glu22, and Asp112 each coordinate a divalent metal cation.

Belongs to the RNase HII family. Mn(2+) is required as a cofactor. Mg(2+) serves as cofactor.

The protein resides in the cytoplasm. It carries out the reaction Endonucleolytic cleavage to 5'-phosphomonoester.. Functionally, endonuclease that specifically degrades the RNA of RNA-DNA hybrids. The sequence is that of Ribonuclease HII from Rickettsia felis (strain ATCC VR-1525 / URRWXCal2) (Rickettsia azadi).